The chain runs to 241 residues: DnaA regulatory inactivator Hda (241 aa).

The protein belongs to the DnaA family. HdA subfamily. As to quaternary structure, the active form seems to be an ADP-bound monomer. Forms the RIDA complex (regulatory inactivation of DnaA) of ATP-DnaA, ADP-Hda and the DNA-loaded beta sliding clamp (dnaN).

Functionally, mediates the interaction of DNA replication initiator protein DnaA with DNA polymerase subunit beta sliding clamp (dnaN). Stimulates hydrolysis of ATP-DnaA to ADP-DnaA, rendering DnaA inactive for reinitiation, a process called regulatory inhibition of DnaA or RIDA. The sequence is that of DnaA regulatory inactivator Hda from Salmonella paratyphi A (strain ATCC 9150 / SARB42).